Here is a 358-residue protein sequence, read N- to C-terminus: MSAFVGKYADELIKTAKYIATPGKGILAADESTGTIGKRFASINVENIESNRQALRELLFTSPGTFPCLSGVILFEETLYQKTTDGKPFVELLMENGVIPGIKVDKGVVDLAGTNGETTTQGLDSLGARCQEYYKAGARFAKWRAVLKIGATEPSELSIQENAKGLARYAIICQENGLVPIVEPEVLTDGSHDIKKCAAVTETVLAAVYKALNDHHVLLEGTLLKPNMVTPGSDSPKVAPEVIAEYTVTALRRTVPPAVPGIVFLSGGQSEEEATLNLNAMNKLDVLKPWTLTFSFGRALQQSTLKAWAGKTENVAKAQATFLTRCKGNSDATLGKYTGGASGDSAASESLYEEGYKY.

Ser-2 carries the post-translational modification N-acetylserine. Residue Arg-39 participates in substrate binding. Cys-68 is subject to S-glutathionyl cysteine; transient. The residue at position 173 (Cys-173) is an S-glutathionyl cysteine; transient; alternate. Cys-173 bears the S-nitrosocysteine; transient; alternate mark. The active-site Proton acceptor is the Glu-183. The active-site Schiff-base intermediate with dihydroxyacetone-P is Lys-225. Substrate-binding positions include 266–268 and Arg-298; that span reads SGG. A Phosphoserine modification is found at Ser-350.

The protein belongs to the class I fructose-bisphosphate aldolase family. As to quaternary structure, homotetramer. Interacts with TRX3. In terms of processing, S-glutathionylated at Cys-68 and Cys-173. Post-translationally, S-nitrosylated at Cys-173. Expressed in rosette leaves and cauline leaves.

The protein resides in the cytoplasm. The protein localises to the cytosol. It catalyses the reaction beta-D-fructose 1,6-bisphosphate = D-glyceraldehyde 3-phosphate + dihydroxyacetone phosphate. The protein operates within carbohydrate degradation; glycolysis; D-glyceraldehyde 3-phosphate and glycerone phosphate from D-glucose: step 4/4. Its function is as follows. Fructose-bisphosphate aldolase that plays a key role in glycolysis and gluconeogenesis. The chain is Fructose-bisphosphate aldolase 5, cytosolic from Arabidopsis thaliana (Mouse-ear cress).